The primary structure comprises 669 residues: Protein adenylyltransferase SelO, mitochondrial (669 aa).

The N-terminal 115 residues, 1 to 115 (MAVYRAALGA…LGLGAPPARE (115 aa)), are a transit peptide targeting the mitochondrion. ATP contacts are provided by G153, G155, K176, D188, G189, R246, and R253. Residue D338 is the Proton acceptor of the active site. 2 residues coordinate Mg(2+): N339 and D348. D348 contributes to the ATP binding site. Residues 634–654 (ATDAEATEADGADGRQRSYSS) form a disordered region. The residue at position 635 (T635) is a Phosphothreonine. S653 bears the Phosphoserine mark. A non-standard amino acid (selenocysteine) is located at residue U667.

This sequence belongs to the SELO family. Mg(2+) is required as a cofactor.

It localises to the mitochondrion. It carries out the reaction L-tyrosyl-[protein] + ATP = O-(5'-adenylyl)-L-tyrosyl-[protein] + diphosphate. The enzyme catalyses L-threonyl-[protein] + ATP = 3-O-(5'-adenylyl)-L-threonyl-[protein] + diphosphate. The catalysed reaction is L-seryl-[protein] + ATP = 3-O-(5'-adenylyl)-L-seryl-[protein] + diphosphate. Functionally, catalyzes the transfer of adenosine 5'-monophosphate (AMP) to Ser, Thr and Tyr residues of target proteins (AMPylation). May be a redox-active mitochondrial selenoprotein which interacts with a redox target protein. The polypeptide is Protein adenylyltransferase SelO, mitochondrial (Homo sapiens (Human)).